The following is a 157-amino-acid chain: MNIRKFIPSLALMLIFFAFANLVLSDANDKAKKPAGKGSPSTLQTPGSSSGASLHAVGPNQGGLSQGLSGKDSADKMPLETQLAIEEIKSLSNMLDKKTTVNRNLIISTAVTNMIMLIILSGIVGFKVKKTKNADDDKGDKDKDKDNTDEGDEGDDS.

The first 25 residues, 1-25, serve as a signal peptide directing secretion; it reads MNIRKFIPSLALMLIFFAFANLVLS. The Extracellular segment spans residues 26-105; that stretch reads DANDKAKKPA…DKKTTVNRNL (80 aa). The segment at 30-74 is disordered; sequence KAKKPAGKGSPSTLQTPGSSSGASLHAVGPNQGGLSQGLSGKDSA. Over residues 39–52 the composition is skewed to polar residues; sequence SPSTLQTPGSSSGA. A helical transmembrane segment spans residues 106–126; it reads IISTAVTNMIMLIILSGIVGF. The Cytoplasmic segment spans residues 127-157; sequence KVKKTKNADDDKGDKDKDKDNTDEGDEGDDS. The tract at residues 130 to 157 is disordered; it reads KTKNADDDKGDKDKDKDNTDEGDEGDDS. The segment covering 132-148 has biased composition (basic and acidic residues); the sequence is KNADDDKGDKDKDKDNT.

It is found in the parasitophorous vacuole membrane. The protein resides in the vacuole. Its function is as follows. Involved in male gametogenesis. Required for exflagellation of male gametocytes. May play a role in parasite transmission in the mosquito. Binds to the mosquito vector midgut. The sequence is that of Parasitophorous vacuole membrane protein S16 from Plasmodium falciparum (isolate 3D7).